A 413-amino-acid polypeptide reads, in one-letter code: Succinate--CoA ligase [ADP-forming] subunit beta, mitochondrial (413 aa).

Residues 1-2 constitute a mitochondrion transit peptide; it reads RR. Residues 11 to 238 form the ATP-grasp domain; sequence MGLLQEAGIS…SNSAYRQKKI (228 aa). Residues K48 and 55 to 57 contribute to the ATP site; that span reads GRG. The Mg(2+) site is built by N208 and D222. Substrate contacts are provided by residues N273 and 330–332; that span reads GIM.

Belongs to the succinate/malate CoA ligase beta subunit family. ATP-specific subunit beta subfamily. Heterodimer of an alpha and a beta subunit. The beta subunit determines specificity for ATP. The cofactor is Mg(2+). In terms of tissue distribution, widely expressed. Not present in liver.

The protein resides in the mitochondrion. The catalysed reaction is succinate + ATP + CoA = succinyl-CoA + ADP + phosphate. Its pathway is carbohydrate metabolism; tricarboxylic acid cycle; succinate from succinyl-CoA (ligase route): step 1/1. Functionally, ATP-specific succinyl-CoA synthetase functions in the citric acid cycle (TCA), coupling the hydrolysis of succinyl-CoA to the synthesis of ATP and thus represents the only step of substrate-level phosphorylation in the TCA. The beta subunit provides nucleotide specificity of the enzyme and binds the substrate succinate, while the binding sites for coenzyme A and phosphate are found in the alpha subunit. The protein is Succinate--CoA ligase [ADP-forming] subunit beta, mitochondrial of Columba livia (Rock dove).